Consider the following 345-residue polypeptide: Protein RecA (345 aa).

Residue 66 to 73 participates in ATP binding; the sequence is GPESSGKT.

Belongs to the RecA family.

It localises to the cytoplasm. Functionally, can catalyze the hydrolysis of ATP in the presence of single-stranded DNA, the ATP-dependent uptake of single-stranded DNA by duplex DNA, and the ATP-dependent hybridization of homologous single-stranded DNAs. It interacts with LexA causing its activation and leading to its autocatalytic cleavage. In Frankia casuarinae (strain DSM 45818 / CECT 9043 / HFP020203 / CcI3), this protein is Protein RecA.